A 468-amino-acid chain; its full sequence is Alpha-2A adrenergic receptor (468 aa).

The Extracellular portion of the chain corresponds to 1–48; the sequence is MFRQEQPLAEGSFAPMGSLQPDAGNASWNGTEAPGGGARATPYSLQVT. 2 N-linked (GlcNAc...) asparagine glycosylation sites follow: N25 and N29. Residues 49-74 form a helical membrane-spanning segment; it reads LTLVCLAGLLMLFTVFGNVLVIIAVF. Topologically, residues 75–85 are cytoplasmic; it reads TSRALKAPQNL. A helical transmembrane segment spans residues 86-111; the sequence is FLVSLASADILVATLVIPFSLANEVM. The Extracellular segment spans residues 112–121; the sequence is GYWYFGKAWC. C121 and C203 form a disulfide bridge. A helical membrane pass occupies residues 122-144; sequence EIYLALDVLFCTSSIVHLCAISL. Over 145 to 164 the chain is Cytoplasmic; it reads DRYWSITQAIEYNLKRTPRR. A helical membrane pass occupies residues 165 to 188; that stretch reads IKAIIVTVWVISAVISFPPLISFE. The Extracellular segment spans residues 189-207; the sequence is KKRGRSGQPSAEPRCEIND. Residues 208-232 traverse the membrane as a helical segment; it reads QKWYVISSSIGSFFAPCLIMILVYV. The Cytoplasmic portion of the chain corresponds to 233–392; it reads RIYQIAKRRT…RQNREKRFTF (160 aa). 2 disordered regions span residues 242 to 279 and 291 to 381; these read TRVP…VGPV and NGAP…SRWR. Positions 315-332 are enriched in basic and acidic residues; that stretch reads SSEHAERPPGSRRSERGP. Residue S348 is modified to Phosphoserine. Over residues 351–366 the composition is skewed to low complexity; the sequence is RRGPGATGLGAPTAGP. R370 carries the post-translational modification Omega-N-methylarginine. A helical transmembrane segment spans residues 393–417; it reads VLAVVIGVFVVCWFPFFFTYTLTAI. Over 418–427 the chain is Extracellular; it reads GCPVPPTLFK. A helical membrane pass occupies residues 428 to 448; the sequence is FFFWFGYCNSSLNPVIYTIFN. The Cytoplasmic portion of the chain corresponds to 449-468; it reads HDFRRAFKKILCRGDRKRIV. The S-palmitoyl cysteine moiety is linked to residue C460.

Belongs to the G-protein coupled receptor 1 family. Adrenergic receptor subfamily. ADRA2A sub-subfamily. In terms of assembly, component of the ADA2A-containing complex (ATAC), composed of KAT14, KAT2A, TADA2L, TADA3L, ZZ3, MBIP, WDR5, YEATS2, CCDC101 and DR1. Retina, brain and olfactory lobe.

Its subcellular location is the cell membrane. In terms of biological role, alpha-2 adrenergic receptors mediate the catecholamine-induced inhibition of adenylate cyclase through the action of G proteins. Component of the ATAC complex, a complex with histone acetyltransferase activity on histones H3 and H4. This Bos taurus (Bovine) protein is Alpha-2A adrenergic receptor.